The following is a 296-amino-acid chain: 4-hydroxy-tetrahydrodipicolinate synthase (296 aa).

Position 50 (T50) interacts with pyruvate. Y138 (proton donor/acceptor) is an active-site residue. Catalysis depends on K166, which acts as the Schiff-base intermediate with substrate. I208 serves as a coordination point for pyruvate.

The protein belongs to the DapA family. In terms of assembly, homotetramer; dimer of dimers.

It localises to the cytoplasm. The catalysed reaction is L-aspartate 4-semialdehyde + pyruvate = (2S,4S)-4-hydroxy-2,3,4,5-tetrahydrodipicolinate + H2O + H(+). It participates in amino-acid biosynthesis; L-lysine biosynthesis via DAP pathway; (S)-tetrahydrodipicolinate from L-aspartate: step 3/4. Catalyzes the condensation of (S)-aspartate-beta-semialdehyde [(S)-ASA] and pyruvate to 4-hydroxy-tetrahydrodipicolinate (HTPA). This chain is 4-hydroxy-tetrahydrodipicolinate synthase, found in Thiobacillus denitrificans (strain ATCC 25259 / T1).